Reading from the N-terminus, the 566-residue chain is Berberine bridge enzyme-like D-2 (566 aa).

Positions 1 to 33 (MKRNISMSLQRLLIILMMISFLFTSLLVPSVSA) are cleaved as a signal peptide. A disulfide bond links Cys42 and Cys103. N-linked (GlcNAc...) asparagine glycosylation occurs at Asn50. The FAD-binding PCMH-type domain maps to 81–257 (SKPKPTVIIV…YAWKIRLLKV (177 aa)). At His118 the chain carries Pros-8alpha-FAD histidine. N-linked (GlcNAc...) asparagine glycosylation is found at Asn364, Asn378, and Asn503.

Belongs to the oxygen-dependent FAD-linked oxidoreductase family. FAD is required as a cofactor.

It localises to the vacuole. It functions in the pathway alkaloid biosynthesis; nicotine biosynthesis. Its function is as follows. Involved in the biosynthesis of pyridine alkaloid natural products, leading mainly to the production of anabasine, anatabine, nicotine and nornicotine, effective deterrents against herbivores with antiparasitic and pesticide properties (neurotoxins); nornicotine serves as the precursor in the synthesis of the carcinogen compound N'-nitrosonornicotine (NNN). Catalyzes a late oxidation step subsequent to the pyridine ring condensation reaction in the biosynthesis of alkaloids. The protein is Berberine bridge enzyme-like D-2 of Nicotiana tabacum (Common tobacco).